The chain runs to 606 residues: MSDSKMDKLARMAPLPRTPLLTIWLAINMALIAQETGHKRIHTVQAATGGGSMLGDVNISAILDSFSVSYDKRVRPNYGGPPVEVGVTMYVLSISSLSEVKMDFTLDFYFRQFWTDPRLAYRKRPGVETLSVGSEFIKNIWVPDTFFVNEKQSYFHIATTSNEFIRVHHSGSITRSIRLTITASCPMNLQYFPMDRQLCHIEIESFGYTMRDIRYKWNEGPNSVGVSSEVSLPQFKVLGHRQRAMEISLTTGNYSRLACEIQFVRSMGYYLIQIYIPSGLIVVISWVSFWLNRNATPARVALGVTTVLTMTTLMSSTNAALPKISYVKSIDVYLGTCFVMVFASLLEYATVGYMAKRIQMRKQRFMAIQKIAEQKKQQLDGANQQQANPNPNANVGGPGGVGVGPGGPGGPGGGVNVGVGMGMGPEHGHGHGHHAHSHGHPHAPKQTVSNRPIGFSNIQQNVGTRGCSIVGPLFQEVRFKVHDPKAHSKGGTLENTVNGGRGGPQSHGPGPGQGGGPPGGGGGGGGGGGPPEGGGDPEAAVPAHLLHPGKVKKDINKLLGITPSDIDKYSRIVFPVCFVCFNLMYWIIYLHVSDVVADDLVLLGEE.

An N-terminal signal peptide occupies residues 1 to 44 (MSDSKMDKLARMAPLPRTPLLTIWLAINMALIAQETGHKRIHTV). At 45–268 (QAATGGGSML…CEIQFVRSMG (224 aa)) the chain is on the extracellular side. N-linked (GlcNAc...) asparagine glycosylation occurs at Asn58. A disulfide bond links Cys185 and Cys199. A glycan (N-linked (GlcNAc...) asparagine) is linked at Asn253. 3 helical membrane-spanning segments follow: residues 269 to 291 (YYLI…SFWL), 297 to 316 (PARV…LMSS), and 333 to 356 (YLGT…YMAK). Residues 357–568 (RIQMRKQRFM…LGITPSDIDK (212 aa)) lie on the Cytoplasmic side of the membrane. Disordered regions lie at residues 376-451 (KQQL…VSNR) and 482-542 (HDPK…AAVP). Over residues 381-395 (GANQQQANPNPNANV) the composition is skewed to low complexity. Residues 396 to 425 (GGPGGVGVGPGGPGGPGGGVNVGVGMGMGP) show a composition bias toward gly residues. The segment covering 430 to 443 (GHGHHAHSHGHPHA) has biased composition (basic residues). The span at 499–536 (GGRGGPQSHGPGPGQGGGPPGGGGGGGGGGGPPEGGGD) shows a compositional bias: gly residues. The chain crosses the membrane as a helical span at residues 569–590 (YSRIVFPVCFVCFNLMYWIIYL).

It belongs to the ligand-gated ion channel (TC 1.A.9) family. Gamma-aminobutyric acid receptor (TC 1.A.9.5) subfamily.

Its subcellular location is the postsynaptic cell membrane. It localises to the cell membrane. Its function is as follows. GABA, an inhibitory neurotransmitter, mediates neuronal inhibition by binding to the GABA receptor and opening an integral chloride channel. The chain is Gamma-aminobutyric acid receptor subunit beta (Rdl) from Drosophila simulans (Fruit fly).